Reading from the N-terminus, the 421-residue chain is Probable pectate lyase C (421 aa).

Positions 1–19 are cleaved as a signal peptide; sequence MQPLHTLLALLPLCRSTTA. Asparagine 164 and asparagine 201 each carry an N-linked (GlcNAc...) asparagine glycan. The active site involves arginine 204. The 36-residue stretch at 257-292 folds into the EF-hand domain; it reads NENFHGYVENNYYDPDQDGTLNGNELGVSSSNYGGM. Ca(2+)-binding residues include aspartate 270, aspartate 272, aspartate 274, threonine 276, and glutamate 281. The segment at 353–376 is disordered; the sequence is DFGGVGDLDGGETPTDTDGDGIPD. Acidic residues predominate over residues 367-376; it reads TDTDGDGIPD.

This sequence belongs to the polysaccharide lyase 1 family. It depends on Ca(2+) as a cofactor.

The protein localises to the secreted. It carries out the reaction Eliminative cleavage of (1-&gt;4)-alpha-D-galacturonan to give oligosaccharides with 4-deoxy-alpha-D-galact-4-enuronosyl groups at their non-reducing ends.. Functionally, pectinolytic enzyme consist of four classes of enzymes: pectin lyase, polygalacturonase, pectin methylesterase and rhamnogalacturonase. Among pectinolytic enzymes, pectin lyase is the most important in depolymerization of pectin, since it cleaves internal glycosidic bonds of highly methylated pectins. Favors pectate, the anion, over pectin, the methyl ester. In Emericella nidulans (strain FGSC A4 / ATCC 38163 / CBS 112.46 / NRRL 194 / M139) (Aspergillus nidulans), this protein is Probable pectate lyase C (plyC).